Reading from the N-terminus, the 108-residue chain is uncharacterized protein (108 aa).

The interval 1 to 108 (MAKVTSEPQK…DKEQSETSVL (108 aa)) is disordered. Basic residues predominate over residues 26-56 (KGRKKGKTPRQRRSRSGVKGLKTTRKAKRPL). Polar residues predominate over residues 58 to 70 (GSSSQKAGETNTP). Over residues 73–92 (KPKKARGPILRGRYHRLKEK) the composition is skewed to basic residues. The span at 93–108 (MKKEEADKEQSETSVL) shows a compositional bias: basic and acidic residues.

This is an uncharacterized protein from Homo sapiens (Human).